Here is a 515-residue protein sequence, read N- to C-terminus: Serine/threonine-protein phosphatase PP-Z (515 aa).

The disordered stretch occupies residues 1–186; the sequence is MGQGSSKHAD…SSTDPDDPET (186 aa). A compositionally biased stretch (polar residues) spans 17-30; it reads PSFSRSDTQGSIKS. At Ser-18 the chain carries Phosphoserine. Residues 40-51 show a composition bias toward basic and acidic residues; the sequence is KGKDSNHDRRTS. Over residues 63-74 the composition is skewed to pro residues; it reads ETPPSLPPPPSP. Over residues 91 to 109 the composition is skewed to polar residues; it reads DSGNSSQSPTSPHPSNQPA. Over residues 126–143 the composition is skewed to low complexity; it reads SSSSYAVSPTSPTSPTSS. Residues Asp-248, His-250, Asp-276, and Asn-308 each coordinate Mn(2+). The active-site Proton donor is His-309. Mn(2+)-binding residues include His-357 and His-432. A phosphoserine mark is found at Ser-505 and Ser-514.

The protein belongs to the PPP phosphatase family. PP-Z subfamily. Mn(2+) is required as a cofactor.

It is found in the cytoplasm. It carries out the reaction O-phospho-L-seryl-[protein] + H2O = L-seryl-[protein] + phosphate. The enzyme catalyses O-phospho-L-threonyl-[protein] + H2O = L-threonyl-[protein] + phosphate. The protein is Serine/threonine-protein phosphatase PP-Z (pzh1) of Schizosaccharomyces pombe (strain 972 / ATCC 24843) (Fission yeast).